We begin with the raw amino-acid sequence, 565 residues long: CTP synthase (565 aa).

Residues 1–272 form an amidoligase domain region; that stretch reads MARPKNVKHI…DLRVLKKLGL (272 aa). Position 18 (S18) interacts with CTP. S18 lines the UTP pocket. 19 to 24 contributes to the ATP binding site; that stretch reads SLGKGI. L-glutamine is bound at residue Y59. D76 lines the ATP pocket. 2 residues coordinate Mg(2+): D76 and E146. CTP-binding positions include 153 to 155, 193 to 198, and K229; these read DIE and KTKPTQ. UTP is bound by residues 193-198 and K229; that span reads KTKPTQ. A Glutamine amidotransferase type-1 domain is found at 299 to 543; sequence TIGICGKYTE…VAAAKEYAHG (245 aa). G363 provides a ligand contact to L-glutamine. The active-site Nucleophile; for glutamine hydrolysis is C390. L-glutamine is bound by residues 391–394, E414, and R471; that span reads LGMQ. Active-site residues include H516 and E518.

This sequence belongs to the CTP synthase family. In terms of assembly, homotetramer.

It carries out the reaction UTP + L-glutamine + ATP + H2O = CTP + L-glutamate + ADP + phosphate + 2 H(+). The catalysed reaction is L-glutamine + H2O = L-glutamate + NH4(+). The enzyme catalyses UTP + NH4(+) + ATP = CTP + ADP + phosphate + 2 H(+). It participates in pyrimidine metabolism; CTP biosynthesis via de novo pathway; CTP from UDP: step 2/2. With respect to regulation, allosterically activated by GTP, when glutamine is the substrate; GTP has no effect on the reaction when ammonia is the substrate. The allosteric effector GTP functions by stabilizing the protein conformation that binds the tetrahedral intermediate(s) formed during glutamine hydrolysis. Inhibited by the product CTP, via allosteric rather than competitive inhibition. In terms of biological role, catalyzes the ATP-dependent amination of UTP to CTP with either L-glutamine or ammonia as the source of nitrogen. Regulates intracellular CTP levels through interactions with the four ribonucleotide triphosphates. This chain is CTP synthase, found in Pelodictyon phaeoclathratiforme (strain DSM 5477 / BU-1).